The sequence spans 81 residues: Cytochrome b559 subunit alpha (81 aa).

The helical transmembrane segment at Val-21 to Trp-35 threads the bilayer. His-23 contacts heme.

The protein belongs to the PsbE/PsbF family. In terms of assembly, heterodimer of an alpha subunit and a beta subunit. PSII is composed of 1 copy each of membrane proteins PsbA, PsbB, PsbC, PsbD, PsbE, PsbF, PsbH, PsbI, PsbJ, PsbK, PsbL, PsbM, PsbT, PsbX, PsbY, PsbZ, Psb30/Ycf12, peripheral proteins PsbO, CyanoQ (PsbQ), PsbU, PsbV and a large number of cofactors. It forms dimeric complexes. The cofactor is heme b.

Its subcellular location is the cellular thylakoid membrane. In terms of biological role, this b-type cytochrome is tightly associated with the reaction center of photosystem II (PSII). PSII is a light-driven water:plastoquinone oxidoreductase that uses light energy to abstract electrons from H(2)O, generating O(2) and a proton gradient subsequently used for ATP formation. It consists of a core antenna complex that captures photons, and an electron transfer chain that converts photonic excitation into a charge separation. The protein is Cytochrome b559 subunit alpha of Synechococcus sp. (strain JA-3-3Ab) (Cyanobacteria bacterium Yellowstone A-Prime).